The following is a 502-amino-acid chain: Dynein regulatory complex subunit 2 (502 aa).

Coiled-coil stretches lie at residues 96–160 (DSVI…RKAI) and 252–285 (EKSS…HSRE).

It belongs to the DRC2 family. Component of the nexin-dynein regulatory complex (N-DRC). Interacts with DRC1.

The protein resides in the cytoplasm. It is found in the cytoskeleton. It localises to the flagellum basal body. The protein localises to the cell projection. Its subcellular location is the cilium. The protein resides in the flagellum. It is found in the flagellum axoneme. Functionally, component of the nexin-dynein regulatory complex (N-DRC), a key regulator of ciliary/flagellar motility which maintains the alignment and integrity of the distal axoneme and regulates microtubule sliding in motile axonemes. Plays a critical role in the assembly of N-DRC and also stabilizes the assembly of multiple inner dynein arms and radial spokes. Coassembles with DRC1 to form a central scaffold needed for assembly of the N-DRC and its attachment to the outer doublet microtubules. This chain is Dynein regulatory complex subunit 2 (Ccdc65), found in Rattus norvegicus (Rat).